The sequence spans 942 residues: Mitogen-activated protein kinase kinase kinase 14 (942 aa).

Basic residues predominate over residues 136 to 152 (GKRHGKARKKRRKKRSK). Disordered regions lie at residues 136–156 (GKRH…SLAQ) and 291–326 (VSGQ…SCPS). A Protein kinase domain is found at 402–657 (MTHQPRVGRG…ELRRKVGKAL (256 aa)). Residues 403-655 (THQPRVGRGS…AMELRRKVGK (253 aa)) form an interaction with ZFP91 region. ATP-binding positions include 408–416 (VGRGSFGEV) and K431. D517 functions as the Proton acceptor in the catalytic mechanism. At T561 the chain carries Phosphothreonine. Disordered regions lie at residues 660-756 (VGGL…FPDR) and 801-823 (SDDS…SSGV). Over residues 707–720 (EPQPPLPPEPPEPS) the composition is skewed to pro residues. Over residues 809–823 (SKASQSSRDTLSSGV) the composition is skewed to polar residues.

The protein belongs to the protein kinase superfamily. STE Ser/Thr protein kinase family. MAP kinase kinase kinase subfamily. Interacts with TRAF2, TRAF3, TRAF5, TRAF6, IKKA and NF-kappa-B2/P100. Interacts with PELI3. Interacts with NIBP; the interaction is direct. Interacts with ARRB1 and ARRB2. Interacts with GRB10. Interacts with ZFP91. Interacts with NLRP12; this interaction promotes proteasomal degradation of MAP3K14. Directly interacts with DDX3X. Interacts (via C-terminus and kinase domain) with PPPC3A (via N-terminus) and PPP3CB. Phosphorylation at Thr-561 is required to activate its kinase activity and 'Lys-63'-linked polyubiquitination. Phosphorylated by CHUK/IKKA leading to MAP3K14 destabilization. Autophosphorylated. Post-translationally, ubiquitinated. Undergoes both 'Lys-48'- and 'Lys-63'-linked polyubiquitination. 'Lys-48'-linked polyubiquitination leads to its degradation by the proteasome, while 'Lys-63'-linked polyubiquitination stabilizes and activates it.

Its subcellular location is the cytoplasm. The catalysed reaction is L-seryl-[protein] + ATP = O-phospho-L-seryl-[protein] + ADP + H(+). The enzyme catalyses L-threonyl-[protein] + ATP = O-phospho-L-threonyl-[protein] + ADP + H(+). Functionally, lymphotoxin beta-activated kinase which seems to be exclusively involved in the activation of NF-kappa-B and its transcriptional activity. Phosphorylates CHUK/IKKA. Promotes proteolytic processing of NFKB2/P100, which leads to activation of NF-kappa-B via the non-canonical pathway. Has an essential role in the non-canonical NF-kappa-B signalining that regulates genes encoding molecules involved in B-cell survival, lymphoid organogenesis, and immune response. Could act in a receptor-selective manner. The chain is Mitogen-activated protein kinase kinase kinase 14 from Mus musculus (Mouse).